The primary structure comprises 148 residues: UPF0179 protein Ta1159 (148 aa).

Belongs to the UPF0179 family.

This is UPF0179 protein Ta1159 from Thermoplasma acidophilum (strain ATCC 25905 / DSM 1728 / JCM 9062 / NBRC 15155 / AMRC-C165).